Consider the following 557-residue polypeptide: DNA ligase B (557 aa).

The active-site N6-AMP-lysine intermediate is the K125.

The protein belongs to the NAD-dependent DNA ligase family. LigB subfamily.

The enzyme catalyses NAD(+) + (deoxyribonucleotide)n-3'-hydroxyl + 5'-phospho-(deoxyribonucleotide)m = (deoxyribonucleotide)n+m + AMP + beta-nicotinamide D-nucleotide.. Its function is as follows. Catalyzes the formation of phosphodiester linkages between 5'-phosphoryl and 3'-hydroxyl groups in double-stranded DNA using NAD as a coenzyme and as the energy source for the reaction. This chain is DNA ligase B, found in Pseudomonas entomophila (strain L48).